The following is a 276-amino-acid chain: Diaminopimelate epimerase (276 aa).

Asparagine 11, glutamine 44, and asparagine 64 together coordinate substrate. Cysteine 73 serves as the catalytic Proton donor. Residues 74–75 (IN), asparagine 159, asparagine 192, and 210–211 (ER) each bind substrate. The Proton acceptor role is filled by cysteine 219. Residue 220 to 221 (GS) coordinates substrate.

This sequence belongs to the diaminopimelate epimerase family. Homodimer.

Its subcellular location is the cytoplasm. It carries out the reaction (2S,6S)-2,6-diaminopimelate = meso-2,6-diaminopimelate. It participates in amino-acid biosynthesis; L-lysine biosynthesis via DAP pathway; DL-2,6-diaminopimelate from LL-2,6-diaminopimelate: step 1/1. Its function is as follows. Catalyzes the stereoinversion of LL-2,6-diaminopimelate (L,L-DAP) to meso-diaminopimelate (meso-DAP), a precursor of L-lysine and an essential component of the bacterial peptidoglycan. The chain is Diaminopimelate epimerase from Wigglesworthia glossinidia brevipalpis.